Here is a 451-residue protein sequence, read N- to C-terminus: MRIFGTDGIRGTINNYPMTPEVCLRAGMALCFLLKKRLPHKPKILIGKDTRISGYVIESALTSGITSMGGDVYLVGPIPTPAVAFLVKSMRVDAGIVISASHNPFSDNGIKIFSNDGFKLTEELENDIEKLINDKDFPAIRPSARELGKAYRIEDAQGRYIEFIKSTLPKDSNLEGLKVAIDPANGAAYKITPTLFHELGAEVITINDKPDGVNINKECGALYPESLIKIVKETQAHFGVAHDGDADRTILVDEKGNIVDGDFILTILAEELKKERKLKKNTVVATIMTNMGVENYLKNAGIKMIRTKVGDKYVVEEMLKGGYNLGGEQSGHIICMDYTNTGDGPITAVQMAYIIKKNQFYLSELIKNIPRYPQALKNIKIPEKLPKDEVKNVIKKLSQKASTLEKNMRGRIIIRPSGTEPKIRIMVEDENPERLKQVLDELEAVANMMLS.

The active-site Phosphoserine intermediate is Ser101. Mg(2+) is bound by residues Ser101, Asp243, Asp245, and Asp247. Phosphoserine is present on Ser101.

It belongs to the phosphohexose mutase family. It depends on Mg(2+) as a cofactor. In terms of processing, activated by phosphorylation.

It catalyses the reaction alpha-D-glucosamine 1-phosphate = D-glucosamine 6-phosphate. Its function is as follows. Catalyzes the conversion of glucosamine-6-phosphate to glucosamine-1-phosphate. The protein is Phosphoglucosamine mutase of Thermodesulfovibrio yellowstonii (strain ATCC 51303 / DSM 11347 / YP87).